Here is a 372-residue protein sequence, read N- to C-terminus: Cytoplasmic tRNA 2-thiolation protein 1 (372 aa).

The segment at 335-372 (GKKEDGGCGSGGGGCGCAGAADETENEETRKRLKDLQF) is disordered. Residues 341-351 (GCGSGGGGCGC) show a composition bias toward gly residues. Over residues 361 to 372 (EETRKRLKDLQF) the composition is skewed to basic and acidic residues.

This sequence belongs to the TtcA family. CTU1/NCS6/ATPBD3 subfamily.

Its subcellular location is the cytoplasm. It participates in tRNA modification; 5-methoxycarbonylmethyl-2-thiouridine-tRNA biosynthesis. In terms of biological role, plays a central role in 2-thiolation of mcm(5)S(2)U at tRNA wobble positions of tRNA(Lys), tRNA(Glu) and tRNA(Gln). Directly binds tRNAs and probably acts by catalyzing adenylation of tRNAs, an intermediate required for 2-thiolation. It is unclear whether it acts as a sulfurtransferase that transfers sulfur from thiocarboxylated URM1 onto the uridine of tRNAs at wobble position. The protein is Cytoplasmic tRNA 2-thiolation protein 1 of Caenorhabditis briggsae.